The sequence spans 424 residues: Methylthioribose-1-phosphate isomerase (424 aa).

The Proton donor role is filled by Asp-281.

It belongs to the eIF-2B alpha/beta/delta subunits family. MtnA subfamily.

Its subcellular location is the cytoplasm. The protein localises to the nucleus. It carries out the reaction 5-(methylsulfanyl)-alpha-D-ribose 1-phosphate = 5-(methylsulfanyl)-D-ribulose 1-phosphate. Its pathway is amino-acid biosynthesis; L-methionine biosynthesis via salvage pathway; L-methionine from S-methyl-5-thio-alpha-D-ribose 1-phosphate: step 1/6. Catalyzes the interconversion of methylthioribose-1-phosphate (MTR-1-P) into methylthioribulose-1-phosphate (MTRu-1-P). The sequence is that of Methylthioribose-1-phosphate isomerase from Candida dubliniensis (strain CD36 / ATCC MYA-646 / CBS 7987 / NCPF 3949 / NRRL Y-17841) (Yeast).